The primary structure comprises 581 residues: Leucine aminopeptidase 3, chloroplastic (581 aa).

A chloroplast-targeting transit peptide spans 1–50 (MAVTLVTSCASSSRFHFRSFSSSPSSLSSCFVRFQLLSRLRVSFAITPLY). Positions 350 and 355 each coordinate Mn(2+). Lys-362 is a catalytic residue. Positions 375, 435, and 437 each coordinate Mn(2+). The active site involves Arg-439.

The protein belongs to the peptidase M17 family. Homohexamer (dimer of homotrimers). Mn(2+) serves as cofactor.

It localises to the plastid. The protein resides in the chloroplast. It catalyses the reaction Release of an N-terminal amino acid, Xaa-|-Yaa-, in which Xaa is preferably Leu, but may be other amino acids including Pro although not Arg or Lys, and Yaa may be Pro. Amino acid amides and methyl esters are also readily hydrolyzed, but rates on arylamides are exceedingly low.. It carries out the reaction Release of N-terminal proline from a peptide.. Its function is as follows. Presumably involved in the processing and regular turnover of intracellular proteins. Catalyzes the removal of unsubstituted N-terminal amino acids from various peptides. Possesses Cys-Gly dipeptidase activity. This chain is Leucine aminopeptidase 3, chloroplastic, found in Arabidopsis thaliana (Mouse-ear cress).